Consider the following 35-residue polypeptide: Cycloamanide F proprotein (35 aa).

Residues 1-10 constitute a propeptide that is removed on maturation; that stretch reads MSDINATRLP. Positions 11–18 form a cross-link, cyclopeptide (Ile-Pro); that stretch reads IVGILGLP. The propeptide occupies 19 to 35; the sequence is CIGDDVNSTLTHGEDLC.

This sequence belongs to the MSDIN fungal toxin family. Processed by the macrocyclase-peptidase enzyme POPB to yield a cyclic decapeptide. POPB first removes 10 residues from the N-terminus. Conformational trapping of the remaining peptide forces the enzyme to release this intermediate rather than proceed to macrocyclization. The enzyme rebinds the remaining peptide in a different conformation and catalyzes macrocyclization of the N-terminal 8 residues.

Its function is as follows. Cyclic octapeptide that belongs to the MSDIN-like toxin family responsible for a large number of food poisoning cases and deaths. Cycloaminide E is structurally related to other cycloamanides that are non-toxic to mammals but show immunosuppressive activity. This Amanita phalloides (Death cap) protein is Cycloamanide F proprotein.